We begin with the raw amino-acid sequence, 515 residues long: Bifunctional purine biosynthesis protein PurH (515 aa).

The region spanning 1-145 is the MGS-like domain; the sequence is MTKRVLISVS…KNHASVTVVV (145 aa).

This sequence belongs to the PurH family.

It carries out the reaction (6R)-10-formyltetrahydrofolate + 5-amino-1-(5-phospho-beta-D-ribosyl)imidazole-4-carboxamide = 5-formamido-1-(5-phospho-D-ribosyl)imidazole-4-carboxamide + (6S)-5,6,7,8-tetrahydrofolate. It catalyses the reaction IMP + H2O = 5-formamido-1-(5-phospho-D-ribosyl)imidazole-4-carboxamide. It participates in purine metabolism; IMP biosynthesis via de novo pathway; 5-formamido-1-(5-phospho-D-ribosyl)imidazole-4-carboxamide from 5-amino-1-(5-phospho-D-ribosyl)imidazole-4-carboxamide (10-formyl THF route): step 1/1. It functions in the pathway purine metabolism; IMP biosynthesis via de novo pathway; IMP from 5-formamido-1-(5-phospho-D-ribosyl)imidazole-4-carboxamide: step 1/1. This Streptococcus pneumoniae (strain JJA) protein is Bifunctional purine biosynthesis protein PurH.